Here is a 99-residue protein sequence, read N- to C-terminus: Phosphoribosyl-ATP pyrophosphatase (99 aa).

The protein belongs to the PRA-PH family.

It is found in the cytoplasm. The enzyme catalyses 1-(5-phospho-beta-D-ribosyl)-ATP + H2O = 1-(5-phospho-beta-D-ribosyl)-5'-AMP + diphosphate + H(+). It functions in the pathway amino-acid biosynthesis; L-histidine biosynthesis; L-histidine from 5-phospho-alpha-D-ribose 1-diphosphate: step 2/9. This chain is Phosphoribosyl-ATP pyrophosphatase, found in Methanococcoides burtonii (strain DSM 6242 / NBRC 107633 / OCM 468 / ACE-M).